The primary structure comprises 320 residues: Protoheme IX farnesyltransferase 1 (320 aa).

9 helical membrane-spanning segments follow: residues 34–54 (GIII…FASA), 58–78 (LTGL…AFVM), 112–132 (AMIL…LYSL), 135–155 (LTAF…TVWV), 160–180 (VWST…GYCA), 189–209 (AVLL…AIGI), 234–254 (IKMM…PFSL), 255–275 (GTGH…GIWI), and 299–319 (LIYF…MFLI).

The protein belongs to the UbiA prenyltransferase family. Protoheme IX farnesyltransferase subfamily. In terms of assembly, interacts with CtaA.

The protein localises to the cell membrane. It carries out the reaction heme b + (2E,6E)-farnesyl diphosphate + H2O = Fe(II)-heme o + diphosphate. The protein operates within porphyrin-containing compound metabolism; heme O biosynthesis; heme O from protoheme: step 1/1. Functionally, converts heme B (protoheme IX) to heme O by substitution of the vinyl group on carbon 2 of heme B porphyrin ring with a hydroxyethyl farnesyl side group. The protein is Protoheme IX farnesyltransferase 1 (ctaB1) of Bacillus subtilis (strain 168).